The chain runs to 446 residues: ATP synthase subunit b-delta (446 aa).

The ATP synthase subunit b stretch occupies residues 1 to 168; sequence MSTFIGQLVG…PAAADVQYPL (168 aa). A helical membrane pass occupies residues 4 to 24; it reads FIGQLVGFAAIVFLVVRYVVP. The ATP synthase subunit delta stretch occupies residues 169–446; the sequence is MTKMRSSSRV…LAAAEAQLPD (278 aa).

In the N-terminal section; belongs to the ATPase B chain family. This sequence in the C-terminal section; belongs to the ATPase delta chain family. F-type ATPases have 2 components, F(1) - the catalytic core - and F(0) - the membrane proton channel. F(1) has five subunits: alpha(3), beta(3), gamma(1), delta(1), epsilon(1). F(0) has three main subunits: a(1), b(2) and c(10-14). The alpha and beta chains form an alternating ring which encloses part of the gamma chain. F(1) is attached to F(0) by a central stalk formed by the gamma and epsilon chains, while a peripheral stalk is formed by the delta and b chains.

It is found in the cell membrane. Its function is as follows. F(1)F(0) ATP synthase produces ATP from ADP in the presence of a proton or sodium gradient. F-type ATPases consist of two structural domains, F(1) containing the extramembraneous catalytic core and F(0) containing the membrane proton channel, linked together by a central stalk and a peripheral stalk. During catalysis, ATP synthesis in the catalytic domain of F(1) is coupled via a rotary mechanism of the central stalk subunits to proton translocation. Functionally, this fusion protein includes a component of the F(0) channel (subunit b) and of the F(1) subunit (subunit delta). Two copies of subunit b and one of delta together form the peripheral 'stator' stalk which links F(1) to F(0). The chain is ATP synthase subunit b-delta (atpFH) from Mycobacterium avium (strain 104).